The following is a 66-amino-acid chain: Large ribosomal subunit protein bL28 (66 aa).

The tract at residues 1-26 is disordered; that stretch reads MAKDAITGARTRFGNQRSHALNSSRR. Residues 13–25 show a composition bias toward polar residues; the sequence is FGNQRSHALNSSR.

Belongs to the bacterial ribosomal protein bL28 family.

This is Large ribosomal subunit protein bL28 from Leuconostoc mesenteroides subsp. mesenteroides (strain ATCC 8293 / DSM 20343 / BCRC 11652 / CCM 1803 / JCM 6124 / NCDO 523 / NBRC 100496 / NCIMB 8023 / NCTC 12954 / NRRL B-1118 / 37Y).